The primary structure comprises 528 residues: Phosphoenolpyruvate carboxykinase (ATP) (528 aa).

3 residues coordinate substrate: Arg56, Tyr192, and Lys198. ATP-binding positions include Lys198, His217, and 233–241; that span reads GLSGTGKTT. Lys198 and His217 together coordinate Mn(2+). Asp254 lines the Mn(2+) pocket. Glu282, Arg319, and Thr444 together coordinate ATP. Arg319 lines the substrate pocket.

This sequence belongs to the phosphoenolpyruvate carboxykinase (ATP) family. Requires Mn(2+) as cofactor.

The protein resides in the cytoplasm. It catalyses the reaction oxaloacetate + ATP = phosphoenolpyruvate + ADP + CO2. It functions in the pathway carbohydrate biosynthesis; gluconeogenesis. Functionally, involved in the gluconeogenesis. Catalyzes the conversion of oxaloacetate (OAA) to phosphoenolpyruvate (PEP) through direct phosphoryl transfer between the nucleoside triphosphate and OAA. This chain is Phosphoenolpyruvate carboxykinase (ATP), found in Geobacillus thermodenitrificans (strain NG80-2).